A 278-amino-acid polypeptide reads, in one-letter code: Ribosomal RNA small subunit methyltransferase A (278 aa).

Residues Asn-27, Leu-29, Gly-54, Glu-75, Asp-101, and Asn-120 each coordinate S-adenosyl-L-methionine.

Belongs to the class I-like SAM-binding methyltransferase superfamily. rRNA adenine N(6)-methyltransferase family. RsmA subfamily.

It localises to the cytoplasm. The catalysed reaction is adenosine(1518)/adenosine(1519) in 16S rRNA + 4 S-adenosyl-L-methionine = N(6)-dimethyladenosine(1518)/N(6)-dimethyladenosine(1519) in 16S rRNA + 4 S-adenosyl-L-homocysteine + 4 H(+). In terms of biological role, specifically dimethylates two adjacent adenosines (A1518 and A1519) in the loop of a conserved hairpin near the 3'-end of 16S rRNA in the 30S particle. May play a critical role in biogenesis of 30S subunits. This Zymomonas mobilis subsp. mobilis (strain ATCC 31821 / ZM4 / CP4) protein is Ribosomal RNA small subunit methyltransferase A.